The following is a 172-amino-acid chain: Small ribosomal subunit protein uS5 (172 aa).

The S5 DRBM domain occupies leucine 11–phenylalanine 74.

The protein belongs to the universal ribosomal protein uS5 family. Part of the 30S ribosomal subunit. Contacts proteins S4 and S8.

With S4 and S12 plays an important role in translational accuracy. Its function is as follows. Located at the back of the 30S subunit body where it stabilizes the conformation of the head with respect to the body. The protein is Small ribosomal subunit protein uS5 of Neorickettsia sennetsu (strain ATCC VR-367 / Miyayama) (Ehrlichia sennetsu).